Here is a 210-residue protein sequence, read N- to C-terminus: dTTP/UTP pyrophosphatase (210 aa).

Asp80 acts as the Proton acceptor in catalysis.

It belongs to the Maf family. YhdE subfamily. A divalent metal cation serves as cofactor.

The protein resides in the cytoplasm. It catalyses the reaction dTTP + H2O = dTMP + diphosphate + H(+). The catalysed reaction is UTP + H2O = UMP + diphosphate + H(+). Nucleoside triphosphate pyrophosphatase that hydrolyzes dTTP and UTP. May have a dual role in cell division arrest and in preventing the incorporation of modified nucleotides into cellular nucleic acids. This chain is dTTP/UTP pyrophosphatase, found in Nitratidesulfovibrio vulgaris (strain ATCC 29579 / DSM 644 / CCUG 34227 / NCIMB 8303 / VKM B-1760 / Hildenborough) (Desulfovibrio vulgaris).